We begin with the raw amino-acid sequence, 212 residues long: Uracil phosphoribosyltransferase (212 aa).

5-phospho-alpha-D-ribose 1-diphosphate contacts are provided by residues Arg78, Arg103, and 130 to 138 (DPMLATGSS). Residues Ile193 and 198–200 (GDA) contribute to the uracil site. Position 199 (Asp199) interacts with 5-phospho-alpha-D-ribose 1-diphosphate.

It belongs to the UPRTase family. It depends on Mg(2+) as a cofactor.

The catalysed reaction is UMP + diphosphate = 5-phospho-alpha-D-ribose 1-diphosphate + uracil. Its pathway is pyrimidine metabolism; UMP biosynthesis via salvage pathway; UMP from uracil: step 1/1. Its activity is regulated as follows. Allosterically activated by GTP. Its function is as follows. Catalyzes the conversion of uracil and 5-phospho-alpha-D-ribose 1-diphosphate (PRPP) to UMP and diphosphate. This Pseudomonas fluorescens (strain SBW25) protein is Uracil phosphoribosyltransferase.